Reading from the N-terminus, the 127-residue chain is MIRTMMNAKIHRARVTESNLNYVGSITIDSDILEAVDILPNEKVAIVNNNNGARFETYVIAGERGSGKICLNGAASRLVEVGDVVIIMTYAQLNEEEIKHHAPKVAVMNEDNVIIEMIHEKENTIVL.

S25 serves as the catalytic Schiff-base intermediate with substrate; via pyruvic acid. The residue at position 25 (S25) is a Pyruvic acid (Ser). A substrate-binding site is contributed by T57. Y58 serves as the catalytic Proton donor. Substrate is bound at residue 73–75 (GAA).

Belongs to the PanD family. As to quaternary structure, heterooctamer of four alpha and four beta subunits. Pyruvate serves as cofactor. In terms of processing, is synthesized initially as an inactive proenzyme, which is activated by self-cleavage at a specific serine bond to produce a beta-subunit with a hydroxyl group at its C-terminus and an alpha-subunit with a pyruvoyl group at its N-terminus.

It localises to the cytoplasm. The catalysed reaction is L-aspartate + H(+) = beta-alanine + CO2. It participates in cofactor biosynthesis; (R)-pantothenate biosynthesis; beta-alanine from L-aspartate: step 1/1. Catalyzes the pyruvoyl-dependent decarboxylation of aspartate to produce beta-alanine. The chain is Aspartate 1-decarboxylase from Staphylococcus aureus (strain bovine RF122 / ET3-1).